The primary structure comprises 500 residues: NAD(P)H-quinone oxidoreductase chain 4, chloroplastic (500 aa).

14 helical membrane passes run 4–24 (FPWLTIIVVLPIFAGSSIFFF), 37–57 (ICICLLELLLTTYAFCYHFQL), 84–104 (GLSIGPILLTGFITTLATLAA), 111–129 (SRLFHFLMLAMYSGQIGSF), 134–154 (LLLFFIMWELELIPVYLLLSM), 167–187 (FILYTAGGSIFLLMGVPGMGL), 208–228 (ALEIIFYFGFLIAYAVKSPII), 242–262 (HYSTCMLLAGILLKMGAYGLV), 272–292 (AHSIFSPWLMIVGTIQIIYAA), 305–325 (IAYSSVSHMGFTIIGIGSITD), 330–350 (GAILQIISHGFIGAALFFLAG), 374–396 (IFTMFSSFSMASLALPGMSGFVA), 416–436 (ILITFVMAIGMILTPIYSLSM), and 462–482 (LFVSICIFLPVIGIGIYPDFV).

This sequence belongs to the complex I subunit 4 family.

It is found in the plastid. Its subcellular location is the chloroplast thylakoid membrane. The enzyme catalyses a plastoquinone + NADH + (n+1) H(+)(in) = a plastoquinol + NAD(+) + n H(+)(out). It catalyses the reaction a plastoquinone + NADPH + (n+1) H(+)(in) = a plastoquinol + NADP(+) + n H(+)(out). The chain is NAD(P)H-quinone oxidoreductase chain 4, chloroplastic from Liriodendron tulipifera (Tuliptree).